Consider the following 200-residue polypeptide: Holliday junction branch migration complex subunit RuvA (200 aa).

A domain I region spans residues 1-63; it reads MIASVRGEVL…EDSMTLYGFP (63 aa). The segment at 64 to 142 is domain II; sequence DSESKELFGL…AVASTSGAVP (79 aa). The segment at 142 to 146 is flexible linker; sequence PLGAG. The interval 147 to 200 is domain III; that stretch reads GGGSVRDQIVEALVGLGFPAKQAEQAADSVLAEAPESTTSTALRSALSLLGKTR.

It belongs to the RuvA family. Homotetramer. Forms an RuvA(8)-RuvB(12)-Holliday junction (HJ) complex. HJ DNA is sandwiched between 2 RuvA tetramers; dsDNA enters through RuvA and exits via RuvB. An RuvB hexamer assembles on each DNA strand where it exits the tetramer. Each RuvB hexamer is contacted by two RuvA subunits (via domain III) on 2 adjacent RuvB subunits; this complex drives branch migration. In the full resolvosome a probable DNA-RuvA(4)-RuvB(12)-RuvC(2) complex forms which resolves the HJ.

It localises to the cytoplasm. Functionally, the RuvA-RuvB-RuvC complex processes Holliday junction (HJ) DNA during genetic recombination and DNA repair, while the RuvA-RuvB complex plays an important role in the rescue of blocked DNA replication forks via replication fork reversal (RFR). RuvA specifically binds to HJ cruciform DNA, conferring on it an open structure. The RuvB hexamer acts as an ATP-dependent pump, pulling dsDNA into and through the RuvAB complex. HJ branch migration allows RuvC to scan DNA until it finds its consensus sequence, where it cleaves and resolves the cruciform DNA. In Rhodococcus jostii (strain RHA1), this protein is Holliday junction branch migration complex subunit RuvA.